The following is a 488-amino-acid chain: MVATCNNGEILHVLFLPFLSAGHFIPLVNAARLFASRGVKATILTTPHNALLFRSTIDDDVRISGFPISIVTIKFPSAEVGLPEGIESFNSATSPEMPHKIFYALSLLQKPMEDKIRELRPDCIFSDMYFPWTVDIADELHIPRILYNLSAYMCYSIMHNLKVYRPHKQPNLDESQSFVVPGLPDEIKFKLSQLTDDLRKSDDQKTVFDELLEQVEDSEERSYGIVHDTFYELEPAYVDYYQKLKKPKCWHFGPLSHFASKIRSKELISEHNNNEIVIDWLNAQKPKSVLYVSFGSMARFPESQLNEIAQALDASNVPFIFVLRPNEETASWLPVGNLEDKTKKGLYIKGWVPQLTIMEHSATGGFMTHCGTNSVLEAITFGVPMITWPLYADQFYNEKVVEVRGLGIKIGIDVWNEGIEITGPVIESAKIREAIERLMISNGSEEIINIRDRVMAMSKMAQNATNEGGSSWNNLTALIQHIKNYNLN.

Histidine 23 acts as the Proton acceptor in catalysis. Histidine 23 provides a ligand contact to an anthocyanidin. Aspartate 127 serves as the catalytic Charge relay. Residues valine 352, glutamine 354, histidine 369, asparagine 373, serine 374, and glutamate 377 each coordinate UDP-alpha-D-glucose. Position 392 (alanine 392) interacts with an anthocyanidin. Positions 393 and 394 each coordinate UDP-alpha-D-glucose.

This sequence belongs to the UDP-glycosyltransferase family. In terms of tissue distribution, expressed in the shoot apical meristem (SAM) and tuber.

The enzyme catalyses solasodine + UDP-alpha-D-glucose = solasodine 3-beta-D-glucoside + UDP + H(+). It carries out the reaction solanidine + UDP-alpha-D-glucose = solanidine 3-O-beta-D-glucopyranoside + UDP + H(+). The catalysed reaction is tomatidine + UDP-alpha-D-glucose = tomatidine 3-O-beta-D-glucopyranoside + UDP + H(+). Glucosyltransferase involved in the glucosylation of the steroidal alkaloid aglycons solanidine, solasodine and tomatidine to produce their corresponding glycoalkaloids. The chain is Solanidine UDP-glucose glucosyltransferase 1 from Solanum tuberosum (Potato).